Consider the following 307-residue polypeptide: Low-salt glycan biosynthesis hexosyltransferase Agl10 (307 aa).

This sequence belongs to the glycosyltransferase 2 family.

It participates in protein modification; protein glycosylation. The protein operates within cell surface structure biogenesis; S-layer biogenesis. Functionally, hexosyltransferase involved in N-glycan biosynthetic pathway that takes place under low-salt conditions (1.75 M instead of 3.4 M). Participates in the formation of the tetrasaccharide present at 'Asn-532' of S-layer glycoprotein Csg, consisting of a sulfated hexose, 2 hexoses and rhamnose. Involved in the addition of final rhamnose (sugar 4) of the tetrasaccharide on the dolichol phosphate carrier. This Haloferax volcanii (strain ATCC 29605 / DSM 3757 / JCM 8879 / NBRC 14742 / NCIMB 2012 / VKM B-1768 / DS2) (Halobacterium volcanii) protein is Low-salt glycan biosynthesis hexosyltransferase Agl10 (agl10).